The following is a 695-amino-acid chain: uncharacterized protein (695 aa).

Disordered stretches follow at residues methionine 1–lysine 112 and methionine 242–histidine 262. The segment covering aspartate 32 to serine 47 has biased composition (low complexity). Basic and acidic residues predominate over residues lysine 96–glutamine 107. The region spanning lysine 278 to histidine 492 is the tr-type G domain. Residues glycine 287–lysine 294, isoleucine 357–asparagine 361, and threonine 417–aspartate 420 each bind GTP.

It belongs to the TRAFAC class translation factor GTPase superfamily. Classic translation factor GTPase family.

It is found in the cytoplasm. Its subcellular location is the nucleus. This is an uncharacterized protein from Schizosaccharomyces pombe (strain 972 / ATCC 24843) (Fission yeast).